Consider the following 644-residue polypeptide: 1-deoxy-D-xylulose-5-phosphate synthase (644 aa).

Residues His84 and Gly125 to Ser127 contribute to the thiamine diphosphate site. Asp156 is a Mg(2+) binding site. Thiamine diphosphate contacts are provided by residues Gly157 to Ala158, Asn185, Tyr296, and Glu378. Asn185 contributes to the Mg(2+) binding site.

This sequence belongs to the transketolase family. DXPS subfamily. In terms of assembly, homodimer. It depends on Mg(2+) as a cofactor. The cofactor is thiamine diphosphate.

It catalyses the reaction D-glyceraldehyde 3-phosphate + pyruvate + H(+) = 1-deoxy-D-xylulose 5-phosphate + CO2. It functions in the pathway metabolic intermediate biosynthesis; 1-deoxy-D-xylulose 5-phosphate biosynthesis; 1-deoxy-D-xylulose 5-phosphate from D-glyceraldehyde 3-phosphate and pyruvate: step 1/1. In terms of biological role, catalyzes the acyloin condensation reaction between C atoms 2 and 3 of pyruvate and glyceraldehyde 3-phosphate to yield 1-deoxy-D-xylulose-5-phosphate (DXP). The sequence is that of 1-deoxy-D-xylulose-5-phosphate synthase from Paramagnetospirillum magneticum (strain ATCC 700264 / AMB-1) (Magnetospirillum magneticum).